A 440-amino-acid polypeptide reads, in one-letter code: Xylose isomerase (440 aa).

Catalysis depends on residues H101 and D104. Mg(2+) is bound by residues E232, E268, H271, D296, D307, D309, and D339.

It belongs to the xylose isomerase family. As to quaternary structure, homotetramer. The cofactor is Mg(2+).

The protein resides in the cytoplasm. It catalyses the reaction alpha-D-xylose = alpha-D-xylulofuranose. The polypeptide is Xylose isomerase (Cronobacter sakazakii (strain ATCC BAA-894) (Enterobacter sakazakii)).